The following is a 66-amino-acid chain: Photosystem II reaction center protein J (66 aa).

Residues 1–23 form a disordered region; that stretch reads MSGNKSPFPDGRIPDRLPDGRPA. The chain crosses the membrane as a helical span at residues 37-57; sequence LWLVATAGGMAVLFVVGLFFY.

It belongs to the PsbJ family. PSII is composed of 1 copy each of membrane proteins PsbA, PsbB, PsbC, PsbD, PsbE, PsbF, PsbH, PsbI, PsbJ, PsbK, PsbL, PsbM, PsbT, PsbX, PsbY, PsbZ, Psb30/Ycf12, peripheral proteins PsbO, CyanoQ (PsbQ), PsbU, PsbV and a large number of cofactors. It forms dimeric complexes.

It localises to the cellular thylakoid membrane. One of the components of the core complex of photosystem II (PSII). PSII is a light-driven water:plastoquinone oxidoreductase that uses light energy to abstract electrons from H(2)O, generating O(2) and a proton gradient subsequently used for ATP formation. It consists of a core antenna complex that captures photons, and an electron transfer chain that converts photonic excitation into a charge separation. In Parasynechococcus marenigrum (strain WH8102), this protein is Photosystem II reaction center protein J.